The sequence spans 295 residues: Nucleotide-binding protein Lxx11490 (295 aa).

Residue 19–26 (GMSGAGRS) coordinates ATP. 70 to 73 (DVRG) is a GTP binding site.

The protein belongs to the RapZ-like family.

Displays ATPase and GTPase activities. The protein is Nucleotide-binding protein Lxx11490 of Leifsonia xyli subsp. xyli (strain CTCB07).